The chain runs to 440 residues: Protein translocase subunit SecY (440 aa).

The next 10 helical transmembrane spans lie at 17–37, 74–94, 116–135, 155–175, 178–198, 213–233, 270–290, 316–336, 374–394, and 403–423; these read IFFT…PSPG, IFAI…LLTV, YTRY…IVAL, FFDL…VMWM, LITE…GIAT, GVVF…VVFV, VIPV…TQIV, WQYI…YVSV, LLFV…IMLD, and GATP…LTTV.

This sequence belongs to the SecY/SEC61-alpha family. Component of the Sec protein translocase complex. Heterotrimer consisting of SecY, SecE and SecG subunits. The heterotrimers can form oligomers, although 1 heterotrimer is thought to be able to translocate proteins. Interacts with the ribosome. Interacts with SecDF, and other proteins may be involved. Interacts with SecA.

Its subcellular location is the cell membrane. Its function is as follows. The central subunit of the protein translocation channel SecYEG. Consists of two halves formed by TMs 1-5 and 6-10. These two domains form a lateral gate at the front which open onto the bilayer between TMs 2 and 7, and are clamped together by SecE at the back. The channel is closed by both a pore ring composed of hydrophobic SecY resides and a short helix (helix 2A) on the extracellular side of the membrane which forms a plug. The plug probably moves laterally to allow the channel to open. The ring and the pore may move independently. This chain is Protein translocase subunit SecY, found in Corynebacterium glutamicum (strain ATCC 13032 / DSM 20300 / JCM 1318 / BCRC 11384 / CCUG 27702 / LMG 3730 / NBRC 12168 / NCIMB 10025 / NRRL B-2784 / 534).